Here is an 838-residue protein sequence, read N- to C-terminus: Rab effector MyRIP (838 aa).

Positions 4 to 124 (KLDLSGLSNN…TQSLEWFYNN (121 aa)) constitute a RabBD domain. An FYVE-type zinc finger spans residues 58 to 112 (KFNEHCCIRCCSPFTFLLNPKRQCLDCHYNICKSCCSYSQSERGYICAACQKSRH). Positions 188–237 (ADTLTVALRVAEEAIEEAIAKAENYKDSLEKQNEARYLHEHKEELIEELA) form a coiled coil. Polar residues-rich tracts occupy residues 263–290 (QNQK…TSQP) and 451–484 (TFTQ…SPST). Disordered stretches follow at residues 263–331 (QNQK…TEVE), 444–501 (SQHD…ETHL), 525–570 (NFNP…LYSA), and 681–838 (ERDV…EKRN). 2 stretches are compositionally biased toward basic and acidic residues: residues 697–736 (NKQE…ERQT) and 753–838 (RQMK…EKRN). Positions 714-833 (KERRESKRES…DLEKKRKSIR (120 aa)) form a coiled coil.

In terms of assembly, interacts with prkar2aa.

It localises to the cytoplasm. The protein resides in the perinuclear region. It is found in the cytoplasmic vesicle. Its subcellular location is the secretory vesicle. May link secretory vesicles to actin filaments. May function as a protein kinase A-anchoring protein (AKAP). May act as a scaffolding protein that links PKA to components of the exocytosis machinery, thus facilitating exocytosis. The protein is Rab effector MyRIP (myrip) of Danio rerio (Zebrafish).